We begin with the raw amino-acid sequence, 305 residues long: Putative monooxygenase p33MONOX (305 aa).

Disordered stretches follow at residues 1–20 (MASR…LGKM) and 37–56 (LEDP…VPWK). The residue at position 44 (T44) is a Phosphothreonine. Positions 67-77 (LAKVEEGEASL) match the Flavin-containing monooxygenase motif motif. Positions 159-305 (SGEITKEERQ…DLNVLTPTGF (147 aa)) are disordered. The segment covering 169–183 (PASAQSTPSTTPHSS) has biased composition (low complexity). The residue at position 175 (T175) is a Phosphothreonine. Residues S182 and S183 each carry the phosphoserine modification. Composition is skewed to polar residues over residues 191-210 (WFTS…TMDS) and 233-243 (KYDSGSSTTQA).

It belongs to the P33MONOX family. In terms of assembly, interacts with NELFB, NOL12 and PRNP.

It localises to the cytoplasm. Its function is as follows. Potential NADPH-dependent oxidoreductase. May be involved in the regulation of neuronal survival, differentiation and axonal outgrowth. The chain is Putative monooxygenase p33MONOX (P33MONOX) from Pongo abelii (Sumatran orangutan).